Reading from the N-terminus, the 120-residue chain is NAD(P)H-quinone oxidoreductase subunit 3, chloroplastic (120 aa).

A run of 3 helical transmembrane segments spans residues 9–29 (IFWA…FISG), 64–84 (MFAL…PWAM), and 88–108 (VLGV…IVGL).

Belongs to the complex I subunit 3 family. In terms of assembly, NDH is composed of at least 16 different subunits, 5 of which are encoded in the nucleus.

The protein localises to the plastid. It localises to the chloroplast thylakoid membrane. The catalysed reaction is a plastoquinone + NADH + (n+1) H(+)(in) = a plastoquinol + NAD(+) + n H(+)(out). It catalyses the reaction a plastoquinone + NADPH + (n+1) H(+)(in) = a plastoquinol + NADP(+) + n H(+)(out). NDH shuttles electrons from NAD(P)H:plastoquinone, via FMN and iron-sulfur (Fe-S) centers, to quinones in the photosynthetic chain and possibly in a chloroplast respiratory chain. The immediate electron acceptor for the enzyme in this species is believed to be plastoquinone. Couples the redox reaction to proton translocation, and thus conserves the redox energy in a proton gradient. The polypeptide is NAD(P)H-quinone oxidoreductase subunit 3, chloroplastic (Lactuca sativa (Garden lettuce)).